The chain runs to 698 residues: Polyribonucleotide nucleotidyltransferase (698 aa).

Mg(2+)-binding residues include Asp-485 and Asp-491. The KH domain occupies 552-611 (PRIHTIKINTDKIRDVIGKGGAVIRSLCEETGTTIEIEDDGTVKIAATSGEQADDAINRI). The region spanning 621 to 689 (GTIYTGKVVR…RQGRVRLSIK (69 aa)) is the S1 motif domain.

This sequence belongs to the polyribonucleotide nucleotidyltransferase family. Component of the RNA degradosome, which is a multiprotein complex involved in RNA processing and mRNA degradation. Requires Mg(2+) as cofactor.

The protein localises to the cytoplasm. It catalyses the reaction RNA(n+1) + phosphate = RNA(n) + a ribonucleoside 5'-diphosphate. Its function is as follows. Involved in mRNA degradation. Catalyzes the phosphorolysis of single-stranded polyribonucleotides processively in the 3'- to 5'-direction. The chain is Polyribonucleotide nucleotidyltransferase from Psychromonas ingrahamii (strain DSM 17664 / CCUG 51855 / 37).